The following is a 391-amino-acid chain: MSRVGVVLLNLGGPERIQDVGPFLYNLFADPEIIRLPSPALQKPLAWLISTLRSGKSQEAYRSIGGGSPLRRITEQQARELQSLLRQRGLDATTYVAMRYWHPFTESAVADMKADGMDEVVVLPLYPHFSISTSGSSFRELQRLRQGDAAFEQLPIRCIRSWFDHPGYIKAMAELIAEEVRNSDDPEKAHVFFSAHGVPKSYVEEAGDPYQQQIEACTDLIMKSLAEHMGHSNPHTLAYQSRVGPVEWLKPYTEEALEQLGEAKTNDLVVVPISFVSEHIETLEEIDIEYRELATEAGVVNFRRVRALDTYPPFIEGLADLVTTSLEGPEVSLDAAAELPTKVKLYPQEKWEWGWNNSSEVWNGRLAMLGFSAFLLELISGHGPLHALGLL.

Fe cation-binding residues include His196 and Glu281.

It belongs to the ferrochelatase family.

The protein localises to the cytoplasm. It catalyses the reaction heme b + 2 H(+) = protoporphyrin IX + Fe(2+). The protein operates within porphyrin-containing compound metabolism; protoheme biosynthesis; protoheme from protoporphyrin-IX: step 1/1. Functionally, catalyzes the ferrous insertion into protoporphyrin IX. The sequence is that of Ferrochelatase from Parasynechococcus marenigrum (strain WH8102).